A 227-amino-acid chain; its full sequence is MEYGFKAAGLVFVVLLLQQAPVLIRATDADPLQDFCVADLNSEVTVNGHACKPASAAGDEFLFSSKIATGGDVNANPNGSNVTELDVAEWPGVNTLGVSMNRVDFAPGGTNPPHVHPRATEVGIVLRGELLVGIIGTLDTGNRYYSKVVRAGETFVIPRGLMHFQFNVGKTEATMVVSFNSQNPGIVFVPLTLFGSNPPIPTPVLVKALRVDAGVVELLKSKFTGGY.

An N-terminal signal peptide occupies residues 1–29; the sequence is MEYGFKAAGLVFVVLLLQQAPVLIRATDA. An intrachain disulfide couples Cys36 to Cys51. The Cupin type-1 domain occupies 65–217; sequence SKIATGGDVN…ALRVDAGVVE (153 aa). Asn78 and Asn81 each carry an N-linked (GlcNAc...) asparagine glycan. Residues His114, His116, Glu121, and His163 each contribute to the Mn(2+) site.

Belongs to the germin family. In terms of assembly, oligomer (believed to be a pentamer but probably hexamer).

It localises to the secreted. It is found in the extracellular space. The protein localises to the apoplast. Functionally, may play a role in plant defense. Probably has no oxalate oxidase activity even if the active site is conserved. This Oryza sativa subsp. japonica (Rice) protein is Germin-like protein 3-5.